We begin with the raw amino-acid sequence, 209 residues long: Octanoyltransferase (209 aa).

The region spanning 30 to 209 is the BPL/LPL catalytic domain; that stretch reads DHEPEIIYLV…IQTEFNKIFK (180 aa). Residues 69–76, 143–145, and 156–158 each bind substrate; these read RGGKFTFH, AIG, and GVA. The active-site Acyl-thioester intermediate is C174.

It belongs to the LipB family.

The protein resides in the cytoplasm. The catalysed reaction is octanoyl-[ACP] + L-lysyl-[protein] = N(6)-octanoyl-L-lysyl-[protein] + holo-[ACP] + H(+). It functions in the pathway protein modification; protein lipoylation via endogenous pathway; protein N(6)-(lipoyl)lysine from octanoyl-[acyl-carrier-protein]: step 1/2. Functionally, catalyzes the transfer of endogenously produced octanoic acid from octanoyl-acyl-carrier-protein onto the lipoyl domains of lipoate-dependent enzymes. Lipoyl-ACP can also act as a substrate although octanoyl-ACP is likely to be the physiological substrate. This Rickettsia africae (strain ESF-5) protein is Octanoyltransferase.